Reading from the N-terminus, the 241-residue chain is tRNA (guanine-N(7)-)-methyltransferase (241 aa).

The span at 1–10 (MTESNDTPIQ) shows a compositional bias: polar residues. Residues 1-20 (MTESNDTPIQTEEGDERQHR) form a disordered region. The S-adenosyl-L-methionine site is built by Glu71, Glu96, Asp123, and Asp146. Residue Asp146 is part of the active site. Substrate contacts are provided by residues Lys150, Asp182, and 219 to 222 (TKFE).

The protein belongs to the class I-like SAM-binding methyltransferase superfamily. TrmB family.

It carries out the reaction guanosine(46) in tRNA + S-adenosyl-L-methionine = N(7)-methylguanosine(46) in tRNA + S-adenosyl-L-homocysteine. The protein operates within tRNA modification; N(7)-methylguanine-tRNA biosynthesis. Functionally, catalyzes the formation of N(7)-methylguanine at position 46 (m7G46) in tRNA. In Pseudomonas fluorescens (strain Pf0-1), this protein is tRNA (guanine-N(7)-)-methyltransferase.